The primary structure comprises 51 residues: Otoconin-90 (51 aa).

This sequence belongs to the phospholipase A2 family. Interacts with OTOL1.

It localises to the secreted. In terms of biological role, major protein of the otoconia, a calcium carbonate structure in the saccule and utricle of the ear. Together with OTOL1, acts as a scaffold for otoconia biomineralization: sequesters calcium and forms interconnecting fibrils between otoconia that are incorporated into the calcium crystal structure. Together with OTOL1, modulates calcite crystal morphology and growth kinetics. It is unlikely that this protein has phospholipase A2 activity. The protein is Otoconin-90 (OC90) of Cavia porcellus (Guinea pig).